The following is a 703-amino-acid chain: Polyribonucleotide nucleotidyltransferase (703 aa).

Residues D486 and D492 each contribute to the Mg(2+) site. The KH domain maps to 553–612 (PKIEIIHINPDKIRDVIGPGGKKINEIIDATGVKLDIEQDGTVFIGSSDASMIEAAKKLI). The 69-residue stretch at 622 to 690 (GQIYMATVKR…KQGRVNASRK (69 aa)) folds into the S1 motif domain.

Belongs to the polyribonucleotide nucleotidyltransferase family. Mg(2+) serves as cofactor.

The protein localises to the cytoplasm. The catalysed reaction is RNA(n+1) + phosphate = RNA(n) + a ribonucleoside 5'-diphosphate. Involved in mRNA degradation. Catalyzes the phosphorolysis of single-stranded polyribonucleotides processively in the 3'- to 5'-direction. In Macrococcus caseolyticus (strain JCSC5402) (Macrococcoides caseolyticum), this protein is Polyribonucleotide nucleotidyltransferase.